The sequence spans 615 residues: Probable methylmalonyl-CoA mutase small subunit (615 aa).

This sequence belongs to the methylmalonyl-CoA mutase family. As to quaternary structure, heterodimer of an alpha and a beta chain. Requires adenosylcob(III)alamin as cofactor.

The catalysed reaction is (R)-methylmalonyl-CoA = succinyl-CoA. It participates in metabolic intermediate metabolism; propanoyl-CoA degradation; succinyl-CoA from propanoyl-CoA: step 3/3. Functionally, catalyzes the isomerization of succinyl-CoA to methylmalonyl-CoA during synthesis of propionate from tricarboxylic acid-cycle intermediates. This is Probable methylmalonyl-CoA mutase small subunit (mutA) from Mycobacterium bovis (strain ATCC BAA-935 / AF2122/97).